The primary structure comprises 660 residues: DNA mismatch repair protein MutL (660 aa).

The protein belongs to the DNA mismatch repair MutL/HexB family.

In terms of biological role, this protein is involved in the repair of mismatches in DNA. It is required for dam-dependent methyl-directed DNA mismatch repair. May act as a 'molecular matchmaker', a protein that promotes the formation of a stable complex between two or more DNA-binding proteins in an ATP-dependent manner without itself being part of a final effector complex. This chain is DNA mismatch repair protein MutL, found in Streptococcus equi subsp. zooepidemicus (strain MGCS10565).